The following is a 152-amino-acid chain: Small ribosomal subunit protein uS19 (152 aa).

It belongs to the universal ribosomal protein uS19 family.

Its function is as follows. Protein S19 forms a complex with S13 that binds strongly to the 16S ribosomal RNA. The chain is Small ribosomal subunit protein uS19 (rps19) from Methanocaldococcus jannaschii (strain ATCC 43067 / DSM 2661 / JAL-1 / JCM 10045 / NBRC 100440) (Methanococcus jannaschii).